The following is a 613-amino-acid chain: Potassium voltage-gated channel subfamily A member 5 (613 aa).

Residues 1-108 (MEIALVPLEN…EGDPGLGTVE (108 aa)) are disordered. Residues 1–211 (MEIALVPLEN…FYQLGDEAME (211 aa)) are tetramerization domain. Over 1–247 (MEIALVPLEN…LIFEYPESSG (247 aa)) the chain is Cytoplasmic. Residues 45 to 62 (GPKEPAPKGRGAQRDADS) show a composition bias toward basic and acidic residues. A run of 2 repeats spans residues 61–71 (DSGVRPLPPLP) and 72–82 (DPGVRPLPPLP). The segment at 61–82 (DSGVRPLPPLPDPGVRPLPPLP) is 2 X 11 AA tandem repeat of D-[SP]-G-V-R-P-L-P-P-L-P. The segment covering 66-83 (PLPPLPDPGVRPLPPLPE) has biased composition (pro residues). A compositionally biased stretch (basic and acidic residues) spans 84–93 (ELPRPRRPPP). K221 participates in a covalent cross-link: Glycyl lysine isopeptide (Lys-Gly) (interchain with G-Cter in SUMO). Residues 248-269 (SARAIAIVSVLVILISIITFCL) form a helical membrane-spanning segment. At 270–323 (ETLPEFRDERELLRHPPAPHQPPAPAPGANGSGVMAPPSGPTVAPLLPRTLADP) the chain is on the extracellular side. The tract at residues 282–304 (LRHPPAPHQPPAPAPGANGSGVM) is disordered. Positions 285 to 295 (PPAPHQPPAPA) are enriched in pro residues. A helical membrane pass occupies residues 324–345 (FFIVETTCVIWFTFELLVRFFA). A lipid anchor (S-palmitoyl cysteine) is attached at C346. The Cytoplasmic segment spans residues 346–356 (CPSKAGFSRNI). Residues 357–377 (MNIIDVVAIFPYFITLGTELA) form a helical membrane-spanning segment. The Extracellular segment spans residues 378 to 395 (EQQPGGGGGGQNGQQAMS). Residues 396–416 (LAILRVIRLVRVFRIFKLSRH) traverse the membrane as a helical; Voltage-sensor segment. Over 417–431 (SKGLQILGKTLQASM) the chain is Cytoplasmic. The interval 418-431 (KGLQILGKTLQASM) is S4-S5 linker. Residues 432–453 (RELGLLIFFLFIGVILFSSAVY) form a helical membrane-spanning segment. The Extracellular segment spans residues 454 to 467 (FAEADNQGTHFSSI). The segment at residues 468 to 479 (PDAFWWAVVTMT) is an intramembrane region (helical). Positions 480–485 (TVGYGD) match the Selectivity filter motif. Residues 480–487 (TVGYGDMR) lie within the membrane without spanning it. Residues 488–494 (PITVGGK) are Extracellular-facing. The chain crosses the membrane as a helical span at residues 495 to 523 (IVGSLCAIAGVLTIALPVPVIVSNFNYFY). At 524 to 613 (HRETDHEEPA…CLDTSRETDL (90 aa)) the chain is on the cytoplasmic side. The segment at 532 to 559 (PAVLKEEQGTQSQGPGLDRGVQRKVSGS) is disordered. K536 participates in a covalent cross-link: Glycyl lysine isopeptide (Lys-Gly) (interchain with G-Cter in SUMO). The residue at position 557 (S557) is a Phosphoserine; by PKA. A PDZ-binding motif is present at residues 611-613 (TDL).

Belongs to the potassium channel family. A (Shaker) (TC 1.A.1.2) subfamily. Kv1.5/KCNA5 sub-subfamily. As to quaternary structure, homotetramer and heterotetramer of potassium channel proteins. Interacts with DLG1, which enhances channel currents. Forms a ternary complex with DLG1 and CAV3. Interacts with KCNAB1. Interacts with UBE2I. Interacts with XIRP2; the interaction is required for normal action potential configuration in the heart. Glycosylated. Post-translationally, sumoylated on Lys-221, and Lys-536, preferentially with SUMO3. Sumoylation regulates the voltage sensitivity of the channel. Pancreatic islets and insulinoma.

The protein localises to the cell membrane. It carries out the reaction K(+)(in) = K(+)(out). Its activity is regulated as follows. Inhibited by 4-aminopyridine, nicotine, bepridil, correolide, and endothelin-1. Functionally, voltage-gated potassium channel that mediates transmembrane potassium transport in excitable membranes. Forms tetrameric potassium-selective channels through which potassium ions pass in accordance with their electrochemical gradient. The channel alternates between opened and closed conformations in response to the voltage difference across the membrane. Can form functional homotetrameric channels and heterotetrameric channels that contain variable proportions of KCNA1, KCNA2, KCNA4, KCNA5, and possibly other family members as well; channel properties depend on the type of alpha subunits that are part of the channel. Channel properties are modulated by cytoplasmic beta subunits that regulate the subcellular location of the alpha subunits and promote rapid inactivation. Homotetrameric channels display rapid activation and slow inactivation. Required for normal electrical conduction including formation of the infranodal ventricular conduction system and normal action potential configuration, as a result of its interaction with XIRP2. May play a role in regulating the secretion of insulin in normal pancreatic islets. Its function is as follows. Exhibits a faster depolarization rate, reduced voltage-dependent recovery from inactivation and an excessive cumulative inactivation. The protein is Potassium voltage-gated channel subfamily A member 5 (KCNA5) of Homo sapiens (Human).